The primary structure comprises 356 residues: Methionine import ATP-binding protein MetN 1 (356 aa).

In terms of domain architecture, ABC transporter spans 2–241 (IELKNISVTF…PQQPLTKDFI (240 aa)). Position 38–45 (38–45 (GYSGAGKS)) interacts with ATP.

It belongs to the ABC transporter superfamily. Methionine importer (TC 3.A.1.24) family. As to quaternary structure, the complex is composed of two ATP-binding proteins (MetN), two transmembrane proteins (MetI) and a solute-binding protein (MetQ).

Its subcellular location is the cell membrane. It carries out the reaction L-methionine(out) + ATP + H2O = L-methionine(in) + ADP + phosphate + H(+). The catalysed reaction is D-methionine(out) + ATP + H2O = D-methionine(in) + ADP + phosphate + H(+). Functionally, part of the ABC transporter complex MetNIQ involved in methionine import. Responsible for energy coupling to the transport system. The protein is Methionine import ATP-binding protein MetN 1 of Enterococcus faecalis (strain ATCC 700802 / V583).